A 62-amino-acid polypeptide reads, in one-letter code: Large ribosomal subunit protein uL30 (62 aa).

Belongs to the universal ribosomal protein uL30 family. Part of the 50S ribosomal subunit.

The polypeptide is Large ribosomal subunit protein uL30 (Roseobacter denitrificans (strain ATCC 33942 / OCh 114) (Erythrobacter sp. (strain OCh 114))).